A 151-amino-acid chain; its full sequence is Small ribosomal subunit protein uS15 (151 aa).

Belongs to the universal ribosomal protein uS15 family.

The protein is Small ribosomal subunit protein uS15 (RPS13) of Candida maltosa (Yeast).